The following is a 240-amino-acid chain: Endonuclease NucS 1 (240 aa).

The protein belongs to the NucS endonuclease family.

It is found in the cytoplasm. In terms of biological role, cleaves both 3' and 5' ssDNA extremities of branched DNA structures. This chain is Endonuclease NucS 1, found in Halobacterium salinarum (strain ATCC 700922 / JCM 11081 / NRC-1) (Halobacterium halobium).